The chain runs to 784 residues: LPS-assembly protein LptD (784 aa).

Positions 1 to 24 (MKKRIPTLLATMIATALYSQQGLA) are cleaved as a signal peptide. 2 cysteine pairs are disulfide-bonded: Cys-31–Cys-724 and Cys-173–Cys-725.

It belongs to the LptD family. Component of the lipopolysaccharide transport and assembly complex. Interacts with LptE and LptA. Contains two intramolecular disulfide bonds.

It localises to the cell outer membrane. Together with LptE, is involved in the assembly of lipopolysaccharide (LPS) at the surface of the outer membrane. In Shigella flexneri serotype 5b (strain 8401), this protein is LPS-assembly protein LptD.